Consider the following 932-residue polypeptide: MTTDTDTDVDAGTDLEPQPEGPPEKMLTRRTELTPMLSQYLDCCEAHPDALVLFQVGDFYEAFCEAATTVAQVCEVTLTQREDSTGTYRMAGVPIDNATSYIEALLSADFRVAIAEQVEEAEATSGLVDRAVTNIITPGTVTNGDLLTDAAATYLGAVSITDSDGDASEMTGAIATVDVSTGACRVTSVEHDQIYEELSRLRPAELLIGPEVDTKTIESSSLPFETMQTTHNSGAFELATATQTLEAYVDEPTAFLSSAERRAVGAVLDYAEYTQGDCGPLEYVSRIRRYKTDTALRVDATAIQSLELFDSRQPYGETLIETIDETSSALGRRTLESWLRRPLADHEAIKTRYDAVAALAENPLVVETLTEKLSHIYDLERLTARTAREQADARDMRSLLQSLDSIPEIKSALIEVLTETELPAETLEQLQAELDSLDDIRTLIDTAVCSDPPQTVTDGDVIAKGFNDDLDDIREREEAGREWVSELETRERERTGIDSLEVGYTEVHGYYIEVTNPNLDHVPDEYTRRQTLKNAERFYTPALKRREDEIIAASNRADKLEYELFCDIRAEVAAETSRLQAVADAIGRLDALVSFATIAISHAYVRPEITADTLAIEAGRHPVVEQTQAEFVPNGITFEKGHIAMITGPNMSGKSTYMRQIAHICILAQAGSFVPADAAQIPVLDRIFTRIGASDDISGGESTFMREMSEMTDILHNATESSLILLDEVGRGTSTTDGRAIARATVEFIHNEIGARTLFTTHYHDLTTVTGSLPSAFNLHFKVHRKTHPDNDASVTFLHRVTSGAADSSYGVEVAKLAGVPTPVVEQAQRYIHTEGEDYTEISEQGTHHHDELTHAEMVSVDHDNQQNQASDDDEIARSPRGADTNTDAGINQSDVSANIDVLKSLRDIDIARMTPLEALNMLENLQRRLDE.

Over residues Met1–Thr13 the composition is skewed to acidic residues. The tract at residues Met1–Met26 is disordered. ATP is bound at residue Gly648 to Ser655. Residues Asn865–Asn892 form a disordered region.

Belongs to the DNA mismatch repair MutS family.

Its function is as follows. This protein is involved in the repair of mismatches in DNA. It is possible that it carries out the mismatch recognition step. This protein has a weak ATPase activity. In Haloquadratum walsbyi (strain DSM 16790 / HBSQ001), this protein is DNA mismatch repair protein MutS.